The sequence spans 150 residues: Large ribosomal subunit protein uL13 (150 aa).

The protein belongs to the universal ribosomal protein uL13 family. Part of the 50S ribosomal subunit.

In terms of biological role, this protein is one of the early assembly proteins of the 50S ribosomal subunit, although it is not seen to bind rRNA by itself. It is important during the early stages of 50S assembly. This chain is Large ribosomal subunit protein uL13, found in Chlorobium phaeobacteroides (strain BS1).